The chain runs to 364 residues: Leucine dehydrogenase (364 aa).

Residue K80 is part of the active site. NAD(+) is bound at residue 180-186; it reads GVGNVAY.

The protein belongs to the Glu/Leu/Phe/Val dehydrogenases family.

It catalyses the reaction L-leucine + NAD(+) + H2O = 4-methyl-2-oxopentanoate + NH4(+) + NADH + H(+). It functions in the pathway amino-acid degradation; L-leucine degradation; 4-methyl-2-oxopentanoate from L-leucine (dehydrogenase route): step 1/1. Its function is as follows. Catalyzes the reversible deamination of L-leucine to 4-methyl-2-oxopentanoate. The protein is Leucine dehydrogenase (yqiT) of Bacillus subtilis (strain 168).